The primary structure comprises 203 residues: Ribosomal RNA large subunit methyltransferase E (203 aa).

Positions 51, 53, 69, 85, and 108 each coordinate S-adenosyl-L-methionine. The active-site Proton acceptor is Lys148.

The protein belongs to the class I-like SAM-binding methyltransferase superfamily. RNA methyltransferase RlmE family.

It is found in the cytoplasm. It catalyses the reaction uridine(2552) in 23S rRNA + S-adenosyl-L-methionine = 2'-O-methyluridine(2552) in 23S rRNA + S-adenosyl-L-homocysteine + H(+). Specifically methylates the uridine in position 2552 of 23S rRNA at the 2'-O position of the ribose in the fully assembled 50S ribosomal subunit. This is Ribosomal RNA large subunit methyltransferase E from Methanocorpusculum labreanum (strain ATCC 43576 / DSM 4855 / Z).